The primary structure comprises 252 residues: MSPGSGVKSEYMKRYREPRWDEYAPCYRELLRYRLGRRLLEQAHAPWLWDAWGPDSPSDSSASPSPAPRGALGEPSAPSAREEEQPVGERGAELRDAEEQDTVLPAPPKKDTEEKPEEHKTKETDGAPSGPGPRQQPSALCARGSKKATRSPQRSTSKIKENKHPFALYGWGERQMDMGSQKTHNVCASASVHEIHESALRAKNRRQVEKRKLAAQRQRAHSVDVEKNQRVKPASAENPWLTEYMRCYSARA.

Met1 carries the N-acetylmethionine modification. Residues 9–15 (SEYMKRY) carry the ST]-E-Y-X(3)-Y motif 1; required for efficient microtubule binding and stabilization motif. Residues 49–163 (WDAWGPDSPS…RSTSKIKENK (115 aa)) form a disordered region. Residues 54–64 (PDSPSDSSASP) show a composition bias toward low complexity. At Ser65 the chain carries Phosphoserine. Residues 108–125 (PKKDTEEKPEEHKTKETD) are compositionally biased toward basic and acidic residues. A Phosphoserine modification is found at Ser191. Residues 242–248 (TEYMRCY) carry the ST]-E-Y-X(3)-Y motif 2; required for efficient microtubule binding and stabilization motif.

It belongs to the CCSAP family. As to quaternary structure, associates with microtubules; the association occurs on polyglutamylated tubulin.

The protein localises to the cytoplasm. Its subcellular location is the cytoskeleton. It localises to the microtubule organizing center. It is found in the centrosome. The protein resides in the centriole. The protein localises to the spindle. Its subcellular location is the cilium basal body. It localises to the cilium axoneme. It is found in the cell projection. The protein resides in the axon. The protein localises to the cilium. Its function is as follows. Plays a role in microtubule (MT) stabilization and this stabilization involves the maintenance of NUMA1 at the spindle poles. Colocalizes with polyglutamylated MTs to promote MT stabilization and regulate bipolar spindle formation in mitosis. Binding of CCSAP to centrosomes and the spindle around centrosomes during mitosis inhibits MT depolymerization, thereby stabilizing the mitotic spindle. May play a role in embryonic development. May be required for proper cilia beating. This Mus musculus (Mouse) protein is Centriole, cilia and spindle-associated protein (Ccsap).